Here is a 157-residue protein sequence, read N- to C-terminus: MSEHTIAHSITLPPGYTLALIPPEPEAGWEMLEWRHSDLTTVAEPVTFGSAPTPSPSMVEETNGVGPEGKFLPLTISPLLHKTSRKALTPTPSLSPLTSLACPNSGIGPRERSTSTPIPSAGTSSTLTQRVLQSLRAPSASTRRSLTASSSSPSTQR.

Disordered regions lie at residues 46-70 (VTFG…PEGK) and 83-157 (TSRK…STQR). The segment covering 88 to 100 (LTPTPSLSPLTSL) has biased composition (low complexity). Residues 114–132 (TSTPIPSAGTSSTLTQRVL) are compositionally biased toward polar residues. The span at 134–157 (SLRAPSASTRRSLTASSSSPSTQR) shows a compositional bias: low complexity.

The chain is Protein p17 (p17) from Helicoverpa armigera (Cotton bollworm).